We begin with the raw amino-acid sequence, 132 residues long: Small ribosomal subunit protein uS8c (132 aa).

This sequence belongs to the universal ribosomal protein uS8 family. In terms of assembly, part of the 30S ribosomal subunit.

The protein resides in the plastid. It is found in the chloroplast. Its function is as follows. One of the primary rRNA binding proteins, it binds directly to 16S rRNA central domain where it helps coordinate assembly of the platform of the 30S subunit. This Zygnema circumcarinatum (Green alga) protein is Small ribosomal subunit protein uS8c (rps8).